A 424-amino-acid chain; its full sequence is Endochitinase 1 (424 aa).

Positions Met1–Ala22 are cleaved as a signal peptide. Positions Tyr39–Pro402 constitute a GH18 domain. N-linked (GlcNAc...) asparagine glycans are attached at residues Asn74, Asn78, and Asn96. Chitin is bound by residues Gly103–Asn104 and Gly130–Thr133. Catalysis depends on Glu172, which acts as the Proton donor. Residues Tyr173 and Met238–Asp241 contribute to the chitin site. Residues Asn248 and Asn347 are each glycosylated (N-linked (GlcNAc...) asparagine). Trp379 contacts chitin. The segment at Arg385 to Pro412 is disordered. Residues Ile392–Leu408 show a composition bias toward polar residues.

The protein belongs to the glycosyl hydrolase 18 family. Chitinase class V subfamily.

It localises to the secreted. The enzyme catalyses Random endo-hydrolysis of N-acetyl-beta-D-glucosaminide (1-&gt;4)-beta-linkages in chitin and chitodextrins.. Its function is as follows. Secreted chitinase involved in the degradation of chitin, a component of the cell walls of fungi and exoskeletal elements of some animals (including worms and arthropods). Participates in the infection process and directly acts in the penetration process of the host cuticle. This chain is Endochitinase 1 (chit1), found in Metarhizium robertsii (strain ARSEF 23 / ATCC MYA-3075) (Metarhizium anisopliae (strain ARSEF 23)).